The chain runs to 511 residues: Cytochrome P450 76C4 (511 aa).

A helical transmembrane segment spans residues 3 to 23; sequence IISGQALFLLFCFISSCFLIS. Residue Cys-450 participates in heme binding.

Belongs to the cytochrome P450 family. It depends on heme as a cofactor.

The protein localises to the membrane. The sequence is that of Cytochrome P450 76C4 (CYP76C4) from Arabidopsis thaliana (Mouse-ear cress).